Here is an 875-residue protein sequence, read N- to C-terminus: Cytosolic phospholipase A2 epsilon (875 aa).

The tract at residues 16 to 70 is disordered; it reads THASEGHHGLGTSMLVPKNPQGEEDSKLGRNCSGFEDAQDPQTAVPSSPLLSMAS. The C2 domain occupies 60 to 183; that stretch reads VPSSPLLSMA…CLRNKTHVKF (124 aa). Low complexity predominate over residues 61–70; the sequence is PSSPLLSMAS. Positions 97, 103, 153, 155, and 161 each coordinate Ca(2+). Residues 332 to 875 enclose the PLA2c domain; it reads PCSDTLDVRL…KKRMRSQCPS (544 aa). The active-site Nucleophile is Ser420. Residue Asp708 is the Proton acceptor of the active site. The residue at position 808 (Ser808) is a Phosphoserine. Positions 865–875 are required for localization at membrane structures; the sequence is EKKRMRSQCPS.

Requires Ca(2+) as cofactor. As to expression, predominantly expressed in brain, heart, skeletal muscle, testis and thyroid. Expressed in neurons but not astrocytes or microglia. Expressed at lower level in stomach.

The protein localises to the cytoplasm. Its subcellular location is the cytosol. It is found in the early endosome membrane. The protein resides in the lysosome membrane. It localises to the cell membrane. It catalyses the reaction a 1,2-diacyl-sn-glycero-3-phosphoethanolamine + a 1,2-diacyl-sn-glycero-3-phosphocholine = an N-acyl-1,2-diacyl-sn-glycero-3-phosphoethanolamine + a 2-acyl-sn-glycero-3-phosphocholine + H(+). It carries out the reaction 1-hexadecanoyl-2-octadecanoyl-sn-glycero-3-phosphocholine + 1,2-di-(9Z-octadecenoyl)-sn-glycero-3-phosphoethanolamine = 2-octadecanoyl-sn-glycero-3-phosphocholine + N-hexadecanoyl-1,2-di-(9Z-octadecenoyl)-sn-glycero-3-phosphoethanolamine + H(+). The catalysed reaction is 1-octadecanoyl-2-hexadecanoyl-sn-glycero-3-phosphocholine + 1,2-di-(9Z-octadecenoyl)-sn-glycero-3-phosphoethanolamine = N-octadecanoyl-1,2-di-(9Z-octadecenoyl)-sn-glycero-3-phosphoethanolamine + 2-hexadecanoyl-sn-glycero-3-phosphocholine + H(+). The enzyme catalyses 1,2-di-(9Z-octadecenoyl)-sn-glycero-3-phosphoethanolamine + 1,2-dihexadecanoyl-sn-glycero-3-phosphocholine = N-hexadecanoyl-1,2-di-(9Z-octadecenoyl)-sn-glycero-3-phosphoethanolamine + 2-hexadecanoyl-sn-glycero-3-phosphocholine + H(+). It catalyses the reaction 1,2-di-(5Z,8Z,11Z,14Z-eicosatetraenoyl)-sn-glycero-3-phosphocholine + 1,2-di-(9Z-octadecenoyl)-sn-glycero-3-phosphoethanolamine = N-(5Z,8Z,11Z,14Z-eicosatetraenoyl)-1,2-di-(9Z-octadecenoyl)-sn-glycero-3-phosphoethanolamine + 2-(5Z,8Z,11Z,14Z)-eicosatetraenoyl-sn-glycero-3-phosphocholine + H(+). It carries out the reaction 2 1,2-di-(9Z-octadecenoyl)-sn-glycero-3-phosphoethanolamine = N,1,2-tri-(9Z-octadecenoyl)-sn-glycero-3-phosphoethanolamine + 2-(9Z-octadecenoyl)-sn-glycero-3-phosphoethanolamine + H(+). The catalysed reaction is a 1,2-diacyl-sn-glycero-3-phosphocholine + H2O = a 1-acyl-sn-glycero-3-phosphocholine + a fatty acid + H(+). The enzyme catalyses 1-(1Z-octadecenyl)-2-(9Z-octadecenoyl)-sn-glycero-3-phosphoethanolamine + 1,2-dihexadecanoyl-sn-glycero-3-phosphocholine = 1-O-(1Z-octadecenoyl)-2-(9Z-octadecenoyl)-sn-glycero-3-phospho-N-hexadecanoyl-ethanolamine + 2-hexadecanoyl-sn-glycero-3-phosphocholine + H(+). It catalyses the reaction 1-hexadecanoyl-2-(5Z,8Z,11Z,14Z-eicosatetraenoyl)-sn-glycero-3-phosphocholine + H2O = 1-hexadecanoyl-sn-glycero-3-phosphocholine + (5Z,8Z,11Z,14Z)-eicosatetraenoate + H(+). It carries out the reaction 1-hexadecanoyl-sn-glycero-3-phosphocholine + H2O = sn-glycerol 3-phosphocholine + hexadecanoate + H(+). With respect to regulation, stimulated by cytosolic Ca(2+). Stimulated by anionic phospholipids such as phosphatidylserine. Functionally, calcium-dependent N-acyltransferase involved in the biosynthesis of N-acyl ethanolamines (NAEs) in the brain. Transfers the sn-1 fatty acyl chain of phosphatidylcholine (fatty acyl donor) to the amine group of phosphatidylethanolamine (fatty acyl acceptor) to generate N-acyl phosphatidylethanolamine (NAPE). Similarly can use plasmenylethanolamine as a fatty acyl acceptor to form N-acyl plasmenylethanolamine (N-Acyl-PlsEt). Both NAPE and N-Acyl-PlsEt can serve as precursors of bioactive NAEs like N-arachidonoyl phosphatidylethanolamine also called anandamide. Has weak phospholipase A2 and lysophospholipase activities. Regulates intracellular membrane trafficking that requires modulation of membrane curvature as it occurs by enrichment in lysophospholipids. Promotes tubule formation involved in clathrin-independent endocytotic trafficking and cargo recycling. The chain is Cytosolic phospholipase A2 epsilon (Pla2g4e) from Mus musculus (Mouse).